A 450-amino-acid chain; its full sequence is Keratin, type I cytoskeletal 25 (450 aa).

Positions 1–11 (MSLRLSSASRR) are enriched in low complexity. The segment at 1–20 (MSLRLSSASRRSCPRPTTGS) is disordered. Residues 1–78 (MSLRLSSASR…VNERGLLSGN (78 aa)) are head. A coil 1A region spans residues 79–114 (EKVTMQNLNDRLASYLDSVHALEEANADLEQKIKGW). Residues 79–394 (EKVTMQNLND…LLIGGDDGAC (316 aa)) enclose the IF rod domain. Residues 115–136 (YEKFGPGSCRGLDHDYSRYFPI) are linker 1. The interval 137-228 (IDDLKNQIIA…KNHKEEMQVL (92 aa)) is coil 1B. A linker 12 region spans residues 229 to 251 (QCAAGGNVNVEMNAAPGVDLTVL). Residues 252–390 (LNNMRAEYEA…ETYCLLIGGD (139 aa)) are coil 2. Residues 391 to 450 (DGACKSGGYKSKDYGSGNVGSQVKDPAKAIVVKKVLEEVDQRSKILTTRLHSLEEKSQSN) form a tail region. Ser-442 is subject to Phosphoserine.

It belongs to the intermediate filament family. As to quaternary structure, heterodimer of a type I and a type II keratin. Heterodimer with type II keratin KRT5 leading to the formation of keratin intermediate filament (KIF) network. Interacts with KRT6A to form filaments. Strongly expressed in skin and scalp, and weak expression observed in thymus and tongue. In the hair follicle, expressed in Henle layer, Huxley layer and in the inner root sheath cuticle of the hair follicle. Expression extends from the bulb region up to the point of differentiation into the three layers. Also present in the medulla of beard hair (at protein level).

Its subcellular location is the cytoplasm. Essential for the proper assembly of type I and type II keratin protein complexes and formation of keratin intermediate filaments in the inner root sheath (irs). Plays a role in the cytoskeleton organization. This chain is Keratin, type I cytoskeletal 25, found in Homo sapiens (Human).